The sequence spans 572 residues: Phenylalanine--tRNA ligase beta subunit (572 aa).

Positions Leu-278–Pro-353 constitute a B5 domain. Asp-331, Asp-337, Glu-340, and Asp-341 together coordinate Mg(2+).

This sequence belongs to the phenylalanyl-tRNA synthetase beta subunit family. Type 2 subfamily. As to quaternary structure, tetramer of two alpha and two beta subunits. It depends on Mg(2+) as a cofactor.

Its subcellular location is the cytoplasm. It catalyses the reaction tRNA(Phe) + L-phenylalanine + ATP = L-phenylalanyl-tRNA(Phe) + AMP + diphosphate + H(+). This is Phenylalanine--tRNA ligase beta subunit from Thermococcus onnurineus (strain NA1).